We begin with the raw amino-acid sequence, 273 residues long: 2-dehydro-3-deoxyphosphooctonate aldolase (273 aa).

Belongs to the KdsA family.

The protein resides in the cytoplasm. It carries out the reaction D-arabinose 5-phosphate + phosphoenolpyruvate + H2O = 3-deoxy-alpha-D-manno-2-octulosonate-8-phosphate + phosphate. Its pathway is carbohydrate biosynthesis; 3-deoxy-D-manno-octulosonate biosynthesis; 3-deoxy-D-manno-octulosonate from D-ribulose 5-phosphate: step 2/3. It participates in bacterial outer membrane biogenesis; lipopolysaccharide biosynthesis. The polypeptide is 2-dehydro-3-deoxyphosphooctonate aldolase (Nitratidesulfovibrio vulgaris (strain DP4) (Desulfovibrio vulgaris)).